The sequence spans 990 residues: Bifunctional glutamine synthetase adenylyltransferase/adenylyl-removing enzyme (990 aa).

Positions M1–P474 are adenylyl removase. The tract at residues A478–A990 is adenylyl transferase.

It belongs to the GlnE family. Mg(2+) is required as a cofactor.

It carries out the reaction [glutamine synthetase]-O(4)-(5'-adenylyl)-L-tyrosine + phosphate = [glutamine synthetase]-L-tyrosine + ADP. The enzyme catalyses [glutamine synthetase]-L-tyrosine + ATP = [glutamine synthetase]-O(4)-(5'-adenylyl)-L-tyrosine + diphosphate. Its function is as follows. Involved in the regulation of glutamine synthetase GlnA, a key enzyme in the process to assimilate ammonia. When cellular nitrogen levels are high, the C-terminal adenylyl transferase (AT) inactivates GlnA by covalent transfer of an adenylyl group from ATP to specific tyrosine residue of GlnA, thus reducing its activity. Conversely, when nitrogen levels are low, the N-terminal adenylyl removase (AR) activates GlnA by removing the adenylyl group by phosphorolysis, increasing its activity. The regulatory region of GlnE binds the signal transduction protein PII (GlnB) which indicates the nitrogen status of the cell. The sequence is that of Bifunctional glutamine synthetase adenylyltransferase/adenylyl-removing enzyme from Rhodopseudomonas palustris (strain ATCC BAA-98 / CGA009).